Consider the following 261-residue polypeptide: Small ribosomal subunit protein uS2 (261 aa).

Belongs to the universal ribosomal protein uS2 family.

The polypeptide is Small ribosomal subunit protein uS2 (Paracoccus denitrificans (strain Pd 1222)).